Consider the following 964-residue polypeptide: Glycine dehydrogenase (decarboxylating) (964 aa).

A compositionally biased stretch (polar residues) spans M1 to T11. Positions M1–L21 are disordered. An N6-(pyridoxal phosphate)lysine modification is found at K713.

It belongs to the GcvP family. As to quaternary structure, the glycine cleavage system is composed of four proteins: P, T, L and H. Pyridoxal 5'-phosphate serves as cofactor.

The catalysed reaction is N(6)-[(R)-lipoyl]-L-lysyl-[glycine-cleavage complex H protein] + glycine + H(+) = N(6)-[(R)-S(8)-aminomethyldihydrolipoyl]-L-lysyl-[glycine-cleavage complex H protein] + CO2. Its function is as follows. The glycine cleavage system catalyzes the degradation of glycine. The P protein binds the alpha-amino group of glycine through its pyridoxal phosphate cofactor; CO(2) is released and the remaining methylamine moiety is then transferred to the lipoamide cofactor of the H protein. The sequence is that of Glycine dehydrogenase (decarboxylating) from Leptospira interrogans serogroup Icterohaemorrhagiae serovar copenhageni (strain Fiocruz L1-130).